A 284-amino-acid chain; its full sequence is Nucleotide-binding protein NMB0738 (284 aa).

8 to 15 (GLSGSGKS) serves as a coordination point for ATP. 58–61 (DVRS) is a GTP binding site.

It belongs to the RapZ-like family.

Its function is as follows. Displays ATPase and GTPase activities. This chain is Nucleotide-binding protein NMB0738, found in Neisseria meningitidis serogroup B (strain ATCC BAA-335 / MC58).